Here is a 106-residue protein sequence, read N- to C-terminus: uncharacterized protein (106 aa).

This is an uncharacterized protein from Mycoplasma pneumoniae (strain ATCC 29342 / M129 / Subtype 1) (Mycoplasmoides pneumoniae).